The primary structure comprises 181 residues: RNA pyrophosphohydrolase (181 aa).

The region spanning 6–148 (GFRPNVGIIV…KRQVYRQALQ (143 aa)) is the Nudix hydrolase domain. The Nudix box motif lies at 38–59 (GGVEANETPLEALYRELREEVG).

The protein belongs to the Nudix hydrolase family. RppH subfamily. Requires a divalent metal cation as cofactor.

Its function is as follows. Accelerates the degradation of transcripts by removing pyrophosphate from the 5'-end of triphosphorylated RNA, leading to a more labile monophosphorylated state that can stimulate subsequent ribonuclease cleavage. This is RNA pyrophosphohydrolase from Halorhodospira halophila (strain DSM 244 / SL1) (Ectothiorhodospira halophila (strain DSM 244 / SL1)).